A 50-amino-acid chain; its full sequence is uncharacterized protein (50 aa).

This is an uncharacterized protein from Bacillus subtilis (strain 168).